Here is a 209-residue protein sequence, read N- to C-terminus: Chaperone protein TorD (209 aa).

It belongs to the TorD/DmsD family. TorD subfamily.

It is found in the cytoplasm. Involved in the biogenesis of TorA. Acts on TorA before the insertion of the molybdenum cofactor and, as a result, probably favors a conformation of the apoenzyme that is competent for acquiring the cofactor. The sequence is that of Chaperone protein TorD from Shewanella sp. (strain MR-4).